Consider the following 693-residue polypeptide: MDSVAFEDVAINFTCEEWALLGPSQKSLYRDVMQETIRNLDCIGMIWQNHDIEEDQYKDLRRNLRCHMVERACEIKDNSQCGGPFTQTQDSIVNEKIPGVDPWESSECTDVLMGRSSLNCYVRVDSEHKPCEYQEYGEKPYTHTQCGTAFSYQPCFQIHERPQHGKKLYDCKECASFSSLENLQRHMAAHHGDGPRICKLCGNAFIWPSLFHMLRRTHTEEKPYEYEQCSTAFPAYSSTLRHERTHSGEKPYQCKQCGKAFSCSCYTQLYERTHTGEQSYECKQCGKAFYHLGSFQRHMIVHTGDGPHKCKICGKGFLSPSSVRRHKRTHTGEKPYECKYCGKAFSDCTGFRRHMITHTGDGPHKCKVCGKAFDSPSLCRRHETTHTGEKPYKCECGKAFSDFYYFRNHETTHTGEKPYKCKQCGKAFICCTYLQIHERIHTGERPYKCKQCGKAFRSSNYIRVHEKTHTGEKPYECKQCGKALSHLKSFQRHMIMHTGDGPHKCKICGKSFDSPSSFRRHERIHTGERPYKCKLCGKGFRSSSYIQLHERTHTGEKPYGCQQCGKALSDLSSFRRHMITHTGNGPHKCKICGKGFDYPSSVQRHERTHTGEKPYECKECGKAFSHSSYLRIHERVHTGEKPYKCKECGKPFHCPSAFHKHERTHSMEKPYKCKECGEAFHCISSFHKHEMTH.

Residues 4-79 (VAFEDVAINF…ERACEIKDNS (76 aa)) enclose the KRAB domain. Residues 169–190 (YDCKECASFSSLENLQRHMAAH) form a C2H2-type 1 zinc finger. A C2H2-type 2; degenerate zinc finger spans residues 196–218 (RICKLCGNAFIWPSLFHMLRRTH). The C2H2-type 3; degenerate zinc-finger motif lies at 224–246 (YEYEQCSTAFPAYSSTLRHERTH). The C2H2-type 4; degenerate zinc finger occupies 252 to 274 (YQCKQCGKAFSCSCYTQLYERTH). C2H2-type zinc fingers lie at residues 280–302 (YECKQCGKAFYHLGSFQRHMIVH), 308–330 (HKCKICGKGFLSPSSVRRHKRTH), 336–358 (YECKYCGKAFSDCTGFRRHMITH), 364–386 (HKCKVCGKAFDSPSLCRRHETTH), 392–413 (YKCECGKAFSDFYYFRNHETTH), 419–441 (YKCKQCGKAFICCTYLQIHERIH), 447–469 (YKCKQCGKAFRSSNYIRVHEKTH), 475–497 (YECKQCGKALSHLKSFQRHMIMH), 503–525 (HKCKICGKSFDSPSSFRRHERIH), 531–553 (YKCKLCGKGFRSSSYIQLHERTH), 559–581 (YGCQQCGKALSDLSSFRRHMITH), 587–609 (HKCKICGKGFDYPSSVQRHERTH), 615–637 (YECKECGKAFSHSSYLRIHERVH), 643–665 (YKCKECGKPFHCPSAFHKHERTH), and 671–693 (YKCKECGEAFHCISSFHKHEMTH).

Belongs to the krueppel C2H2-type zinc-finger protein family.

It localises to the nucleus. In terms of biological role, may be involved in transcriptional regulation. This chain is Zinc finger protein 441 (ZNF441), found in Homo sapiens (Human).